Consider the following 147-residue polypeptide: Hemoglobin subunit beta-2 (147 aa).

One can recognise a Globin domain in the interval 3-147 (HWTAEEKAAI…LVDGLSQGYN (145 aa)). Residues H64 and H93 each coordinate heme b.

The protein belongs to the globin family. In terms of assembly, heterotetramer of two alpha chains and two beta chains. In terms of tissue distribution, red blood cells.

Its function is as follows. Involved in oxygen transport from the lung to the various peripheral tissues. This Xenopus laevis (African clawed frog) protein is Hemoglobin subunit beta-2 (hbb2).